A 37-amino-acid chain; its full sequence is Cytochrome b6-f complex subunit 5 (37 aa).

Residues 5–25 (LLSGIILGLIPITICGLFFTA) traverse the membrane as a helical segment.

The protein belongs to the PetG family. The 4 large subunits of the cytochrome b6-f complex are cytochrome b6, subunit IV (17 kDa polypeptide, PetD), cytochrome f and the Rieske protein, while the 4 small subunits are PetG, PetL, PetM and PetN. The complex functions as a dimer.

It localises to the plastid. The protein resides in the chloroplast thylakoid membrane. In terms of biological role, component of the cytochrome b6-f complex, which mediates electron transfer between photosystem II (PSII) and photosystem I (PSI), cyclic electron flow around PSI, and state transitions. PetG is required for either the stability or assembly of the cytochrome b6-f complex. This is Cytochrome b6-f complex subunit 5 from Euglena gracilis.